Consider the following 39-residue polypeptide: L-amino-acid oxidase (39 aa).

It belongs to the flavin monoamine oxidase family. FIG1 subfamily. In terms of assembly, monomer. This is in contrast with most of its orthologs, that are non-covalently linked homodimers. It depends on FAD as a cofactor. In terms of processing, N-glycosylated. Expressed by the venom gland.

The protein resides in the secreted. It catalyses the reaction an L-alpha-amino acid + O2 + H2O = a 2-oxocarboxylate + H2O2 + NH4(+). The enzyme catalyses L-leucine + O2 + H2O = 4-methyl-2-oxopentanoate + H2O2 + NH4(+). Functionally, catalyzes an oxidative deamination of predominantly hydrophobic and aromatic L-amino acids, thus producing hydrogen peroxide that may contribute to the diverse toxic effects of this enzyme. Shows activity on L-Leu. Exhibits diverse biological activities, such as hemorrhage, hemolysis, edema, apoptosis of vascular endothelial cells or tumor cell lines, and antiparasitic activities, as well as regulation of platelet aggregation. Effects of snake L-amino oxidases on platelets are controversial, since they either induce aggregation or inhibit agonist-induced aggregation. These different effects are probably due to different experimental conditions. In addition, this protein inhibits dose-dependently the growth of Gram-positive, Gram-negative bacteria and yeast, probably by the generation of hydrogen peroxide. This is L-amino-acid oxidase from Bothrops marajoensis (Marajo lancehead).